A 203-amino-acid chain; its full sequence is Protein shisa-like-1a (203 aa).

A signal peptide spans 1-25 (MIMNGRWSFNTLAIIFILLSTAALS). Topologically, residues 26–97 (AHFRVCEPYS…SDSFAHNNYT (72 aa)) are extracellular. 5 N-linked (GlcNAc...) asparagine glycosylation sites follow: Asn-53, Asn-63, Asn-72, Asn-83, and Asn-95. Residues 98–118 (ALIGVWIYGFFVMVLLALDFL) traverse the membrane as a helical segment. Residues 119 to 203 (YYSAMNYELC…LLSFQTSTAW (85 aa)) lie on the Cytoplasmic side of the membrane. The disordered stretch occupies residues 157 to 191 (ELNTGPGLSQQQQLHLHHHHHHHHPRHSLRGDTQS). A compositionally biased stretch (low complexity) spans 161–170 (GPGLSQQQQL). Residues 171 to 184 (HLHHHHHHHHPRHS) show a composition bias toward basic residues.

The protein belongs to the shisa family.

The protein resides in the membrane. This is Protein shisa-like-1a (shisal1a) from Danio rerio (Zebrafish).